Here is an 83-residue protein sequence, read N- to C-terminus: Putative beta-neurotoxin RjAa15f (83 aa).

The N-terminal stretch at 1–18 (MKILIFIIASFMLIGVEC) is a signal peptide. Positions 19–82 (KEGYPMGRNG…VWDSSNNKCV (64 aa)) constitute an LCN-type CS-alpha/beta domain. Intrachain disulfides connect C29/C81, C33/C55, C40/C62, and C44/C64.

The protein belongs to the long (4 C-C) scorpion toxin superfamily. Sodium channel inhibitor family. Beta subfamily. In terms of tissue distribution, expressed by the venom gland.

Its subcellular location is the secreted. Its function is as follows. Beta toxins bind voltage-independently at site-4 of sodium channels (Nav) and shift the voltage of activation toward more negative potentials thereby affecting sodium channel activation and promoting spontaneous and repetitive firing. The chain is Putative beta-neurotoxin RjAa15f from Rhopalurus junceus (Caribbean blue scorpion).